The primary structure comprises 204 residues: MSQVDINHARALVYQLLSSLFAREVDEQRLKELTSEAAQQFWEQLSLEANFTQSVDKIRSTLNGIKDDEALLELAADYCGLFLVGTKHSASPYASLYLSGEDEPLLFGEQHQQMSEFLHQSKLQVQSHFPEPADHLAVMLAYMAHLCCHSEDSVQLSFLQTCVDSWLAKFINQLTQCDKNGFYSAVATLTLAWVKQDIAQLEPA.

Belongs to the TorD/DmsD family. TorD subfamily.

The protein resides in the cytoplasm. Functionally, involved in the biogenesis of TorA. Acts on TorA before the insertion of the molybdenum cofactor and, as a result, probably favors a conformation of the apoenzyme that is competent for acquiring the cofactor. The protein is Chaperone protein TorD of Shewanella baltica (strain OS223).